The primary structure comprises 476 residues: Probable cytosolic Fe-S cluster assembly factor GI11683 (476 aa).

The [4Fe-4S] cluster site is built by Cys23, Cys68, Cys71, Cys74, Cys187, Cys243, Cys395, and Cys399.

The protein belongs to the NARF family.

Component of the cytosolic iron-sulfur (Fe/S) protein assembly machinery. Required for maturation of extramitochondrial Fe/S proteins. This Drosophila mojavensis (Fruit fly) protein is Probable cytosolic Fe-S cluster assembly factor GI11683.